The chain runs to 247 residues: ATP synthase subunit a, chloroplastic (247 aa).

5 helical membrane-spanning segments follow: residues 38 to 58 (QVLITSWVVIAILLGSASIAV), 95 to 115 (VPFIGTMFLFIFVSNWSGALL), 134 to 154 (INTTVALALLTSVAYFYAGLT), 199 to 219 (LVVVVLVSLVPLVVPIPVMFL), and 220 to 240 (GLFTSGIQALIFATLAAAYIG).

It belongs to the ATPase A chain family. F-type ATPases have 2 components, CF(1) - the catalytic core - and CF(0) - the membrane proton channel. CF(1) has five subunits: alpha(3), beta(3), gamma(1), delta(1), epsilon(1). CF(0) has four main subunits: a, b, b' and c.

It is found in the plastid. The protein localises to the chloroplast thylakoid membrane. Functionally, key component of the proton channel; it plays a direct role in the translocation of protons across the membrane. This Eucalyptus globulus subsp. globulus (Tasmanian blue gum) protein is ATP synthase subunit a, chloroplastic.